Consider the following 281-residue polypeptide: CCAAT/enhancer-binding protein epsilon (281 aa).

Positions Met1 to Leu30 are disordered. Lys121 participates in a covalent cross-link: Glycyl lysine isopeptide (Lys-Gly) (interchain with G-Cter in SUMO2). Ser181 is modified (phosphoserine). Positions Ser204 to Ile267 constitute a bZIP domain. The interval Arg208 to Arg245 is basic motif. The segment at Leu246–Ile267 is leucine-zipper.

The protein belongs to the bZIP family. C/EBP subfamily. As to quaternary structure, binds DNA as a homodimer and as a heterodimer. Can form stable heterodimers with CEBPA, CEBPB and CEBPD. Interacts with GATA1 and SPI1. Interacts with SMARCD2. Post-translationally, phosphorylated.

It localises to the nucleus. In terms of biological role, transcriptional activator. C/EBP are DNA-binding proteins that recognize two different motifs: the CCAAT homology common to many promoters and the enhanced core homology common to many enhancers. Required for the promyelocyte-myelocyte transition in myeloid differentiation. The polypeptide is CCAAT/enhancer-binding protein epsilon (Cebpe) (Mus musculus (Mouse)).